The primary structure comprises 1462 residues: Copper-transporting ATPase 2 (1462 aa).

Residues 1–23 (MDPRKNLASVGTMPEQERQVTAK) are disordered. Topologically, residues 1–655 (MDPRKNLASV…KTEIKQWKKS (655 aa)) are cytoplasmic. 4 consecutive HMA domains span residues 68–134 (ATDV…FEAS), 153–219 (AVVK…FEAA), 267–333 (ATLP…PGHF), and 361–427 (RTAV…FEVS). Cu(+) contacts are provided by C79, C82, C164, C167, C278, and C281. Residues 333-361 (FKVSLPDGVEENEPQSGSSQRHQEQGPGR) are disordered. C372 is a binding site for Cu(+). Residues 460–487 (KMAPDTRGLPTHQGPGHSSETPSSPGAT) form a disordered region. Polar residues predominate over residues 475–487 (GHSSETPSSPGAT). A phosphoserine mark is found at S478 and S483. HMA domains follow at residues 490 to 556 (QKCF…FEAS) and 566 to 632 (GDIE…FHAS). Residues C501, C504, C577, and C580 each coordinate Cu(+). A helical membrane pass occupies residues 656-677 (FLCSLVFGIPVMGLMVYMLIPS). Topologically, residues 678 to 699 (STPQETMVLDHNIIPGLSVLNL) are extracellular. The helical transmembrane segment at 700–719 (IFFILCTFVQFLGGWYFYVQ) threads the bilayer. Residues 720–726 (AYKSLRH) are Cytoplasmic-facing. The chain crosses the membrane as a helical span at residues 727-747 (RSANMDVLIVLATTIAYAYSL). The Extracellular portion of the chain corresponds to 748 to 766 (VILVVAVAEKAEKSPVTFF). A helical transmembrane segment spans residues 767 to 787 (DTPPMLFVFIALGRWLEHVAK). Over 788-921 (SKTSEALAKL…KAPIQQLADR (134 aa)) the chain is Cytoplasmic. A helical membrane pass occupies residues 922–944 (FSGYFVPFIIIISTLTLVVWIVI). Residues 945–974 (GFVDFGVVQKYFPSPSKHISQTEVIIRFAF) are Extracellular-facing. Residues 975 to 996 (QTSITVLCIACPCSLGLATPTA) form a helical membrane-spanning segment. Topologically, residues 997–1319 (VMVGTGVAAQ…LSKRTVRRIR (323 aa)) are cytoplasmic. D1029 serves as the catalytic 4-aspartylphosphate intermediate. D1264 and D1268 together coordinate Mg(2+). Residues 1320–1337 (VNLVLALIYNMVGIPIAA) form a helical membrane-spanning segment. Residues 1338 to 1348 (GVFMPIGIVLQ) lie on the Extracellular side of the membrane. Residues 1349-1368 (PWMGSAAMAASSVSVVLSSL) form a helical membrane-spanning segment. Over 1369–1462 (QLKCYRKPDL…LSDRDEEQCI (94 aa)) the chain is Cytoplasmic. Phosphoserine occurs at positions 1395 and 1454.

The protein belongs to the cation transport ATPase (P-type) (TC 3.A.3) family. Type IB subfamily. As to quaternary structure, monomer. Interacts with COMMD1/MURR1. Interacts with DCTN4, in a copper-dependent manner. Interacts with ATOX1. Interacts (via C-terminus) with ZBTB16/PLZF. In terms of tissue distribution, detected in liver and kidney.

It localises to the golgi apparatus. The protein localises to the trans-Golgi network membrane. It is found in the late endosome. The enzyme catalyses Cu(+)(in) + ATP + H2O = Cu(+)(out) + ADP + phosphate + H(+). Functionally, copper ion transmembrane transporter involved in the export of copper out of the cells, such as the efflux of hepatic copper into the bile. The polypeptide is Copper-transporting ATPase 2 (Atp7b) (Mus musculus (Mouse)).